The sequence spans 416 residues: E3 ubiquitin-protein ligase RNFT1 (416 aa).

Residues 27–45 (QSSSGHTHHQPGSNDSPSV) are compositionally biased toward polar residues. Disordered regions lie at residues 27–50 (QSSS…MSLP) and 63–116 (GDVT…ADSR). The span at 77-86 (GARSSSRRVR) shows a compositional bias: basic residues. Transmembrane regions (helical) follow at residues 146–166 (LVVQ…TFLY), 184–204 (LQCL…YYTF), 214–234 (VFMN…VVGI), 237–257 (FIGK…PSFV), 265–287 (YWYM…PVWF), and 302–322 (WHFG…IIFG). The segment at 349–400 (CSEVDGMCAICQAEFIKPIVLVCQHVFCEECISLWFNKEKTCPLCRTVISNQ) is required for ubiquitin ligase activity and for protection against ER stress-induced cell death. The RING-type zinc finger occupies 356–394 (CAICQAEFIKPIVLVCQHVFCEECISLWFNKEKTCPLCR).

It localises to the endoplasmic reticulum membrane. The enzyme catalyses S-ubiquitinyl-[E2 ubiquitin-conjugating enzyme]-L-cysteine + [acceptor protein]-L-lysine = [E2 ubiquitin-conjugating enzyme]-L-cysteine + N(6)-ubiquitinyl-[acceptor protein]-L-lysine.. It participates in protein modification; protein ubiquitination. Functionally, E3 ubiquitin-protein ligase that acts in the endoplasmic reticulum (ER)-associated degradation (ERAD) pathway, which targets misfolded proteins that accumulate in the endoplasmic reticulum (ER) for ubiquitination and subsequent proteasome-mediated degradation. Protects cells from ER stress-induced apoptosis. The protein is E3 ubiquitin-protein ligase RNFT1 (rnft1) of Xenopus tropicalis (Western clawed frog).